The chain runs to 337 residues: Glyceraldehyde-3-phosphate dehydrogenase (337 aa).

NAD(+) is bound by residues 12 to 13 (RI), D34, and R79. Residues 150–152 (SCT), T181, 210–211 (TG), and R233 each bind D-glyceraldehyde 3-phosphate. The Nucleophile role is filled by C151. Position 315 (N315) interacts with NAD(+).

The protein belongs to the glyceraldehyde-3-phosphate dehydrogenase family. As to quaternary structure, homotetramer.

It localises to the cytoplasm. The enzyme catalyses D-glyceraldehyde 3-phosphate + phosphate + NAD(+) = (2R)-3-phospho-glyceroyl phosphate + NADH + H(+). It functions in the pathway carbohydrate degradation; glycolysis; pyruvate from D-glyceraldehyde 3-phosphate: step 1/5. This is Glyceraldehyde-3-phosphate dehydrogenase (GPD) from Coccidioides immitis (strain RS) (Valley fever fungus).